Here is a 325-residue protein sequence, read N- to C-terminus: VSG expression site-associated protein 117A (325 aa).

The N-terminal stretch at 1–23 (MKVTIVELVVWLFSVNFFVVVAE) is a signal peptide. N-linked (GlcNAc...) asparagine glycans are attached at residues asparagine 72, asparagine 290, and asparagine 313.

In terms of biological role, not known but may be related to activation of the variant surface glycoprotein genes. This Trypanosoma brucei brucei protein is VSG expression site-associated protein 117A.